The sequence spans 427 residues: Probable transcription factor At5g28040 (427 aa).

Positions 1-81 are disordered; that stretch reads MASDQRDTDF…APATKSSSGT (81 aa). Residue S14 is modified to Phosphoserine. Residues 22–32 show a composition bias toward gly residues; that stretch reads GGGGGGRGGGE. Over residues 33–62 the composition is skewed to acidic residues; sequence TESDEDVVIPEPNEAEDDDHDPDPDPEYED.

It belongs to the GeBP family.

This is Probable transcription factor At5g28040 from Arabidopsis thaliana (Mouse-ear cress).